Consider the following 382-residue polypeptide: Succinate--CoA ligase [ADP-forming] subunit beta (382 aa).

ATP is bound by residues Lys-46, 53–55 (GRG), Val-95, and Glu-100. Positions 192 and 206 each coordinate Mg(2+). Residues Asn-257 and 314–316 (GIT) each bind substrate.

Belongs to the succinate/malate CoA ligase beta subunit family. As to quaternary structure, heterotetramer of two alpha and two beta subunits. The cofactor is Mg(2+).

The enzyme catalyses succinate + ATP + CoA = succinyl-CoA + ADP + phosphate. The catalysed reaction is GTP + succinate + CoA = succinyl-CoA + GDP + phosphate. It functions in the pathway carbohydrate metabolism; tricarboxylic acid cycle; succinate from succinyl-CoA (ligase route): step 1/1. Its function is as follows. Succinyl-CoA synthetase functions in the citric acid cycle (TCA), coupling the hydrolysis of succinyl-CoA to the synthesis of either ATP or GTP and thus represents the only step of substrate-level phosphorylation in the TCA. The beta subunit provides nucleotide specificity of the enzyme and binds the substrate succinate, while the binding sites for coenzyme A and phosphate are found in the alpha subunit. This chain is Succinate--CoA ligase [ADP-forming] subunit beta, found in Bacteroides fragilis (strain ATCC 25285 / DSM 2151 / CCUG 4856 / JCM 11019 / LMG 10263 / NCTC 9343 / Onslow / VPI 2553 / EN-2).